The sequence spans 193 residues: Acyl-homoserine-lactone synthase (193 aa).

Belongs to the autoinducer synthase family.

It carries out the reaction a fatty acyl-[ACP] + S-adenosyl-L-methionine = an N-acyl-L-homoserine lactone + S-methyl-5'-thioadenosine + holo-[ACP] + H(+). Required for the synthesis of OHHL (N-(3-oxohexanoyl)-L-homoserine lactone) also known as VAI or N-(beta-ketocaproyl)homoserine lactone or 3-oxo-N-(tetrahydro-2-oxo-3-furanyl)-hexanamide, an autoinducer molecule which binds to LuxR and thus acts in bioluminescence regulation. This is Acyl-homoserine-lactone synthase (luxI) from Aliivibrio fischeri (strain ATCC 700601 / ES114) (Vibrio fischeri).